Consider the following 353-residue polypeptide: Holliday junction branch migration complex subunit RuvB (353 aa).

Positions 4 to 185 are large ATPase domain (RuvB-L); that stretch reads ADRLITAAGG…FGIVQRLEFY (182 aa). Residues Ile-24, Arg-25, Gly-66, Lys-69, Thr-70, Thr-71, 132–134, Arg-175, Tyr-185, and Arg-222 contribute to the ATP site; that span reads EDF. Thr-70 contributes to the Mg(2+) binding site. The tract at residues 186–256 is small ATPAse domain (RuvB-S); it reads NIADLSTIVS…TADKALNLLD (71 aa). A head domain (RuvB-H) region spans residues 259 to 353; that stretch reads EHGFDHQDRR…DDVVDDPADL (95 aa). Residues Arg-295, Arg-314, and Arg-319 each coordinate DNA.

This sequence belongs to the RuvB family. As to quaternary structure, homohexamer. Forms an RuvA(8)-RuvB(12)-Holliday junction (HJ) complex. HJ DNA is sandwiched between 2 RuvA tetramers; dsDNA enters through RuvA and exits via RuvB. An RuvB hexamer assembles on each DNA strand where it exits the tetramer. Each RuvB hexamer is contacted by two RuvA subunits (via domain III) on 2 adjacent RuvB subunits; this complex drives branch migration. In the full resolvosome a probable DNA-RuvA(4)-RuvB(12)-RuvC(2) complex forms which resolves the HJ.

The protein localises to the cytoplasm. The catalysed reaction is ATP + H2O = ADP + phosphate + H(+). The RuvA-RuvB-RuvC complex processes Holliday junction (HJ) DNA during genetic recombination and DNA repair, while the RuvA-RuvB complex plays an important role in the rescue of blocked DNA replication forks via replication fork reversal (RFR). RuvA specifically binds to HJ cruciform DNA, conferring on it an open structure. The RuvB hexamer acts as an ATP-dependent pump, pulling dsDNA into and through the RuvAB complex. RuvB forms 2 homohexamers on either side of HJ DNA bound by 1 or 2 RuvA tetramers; 4 subunits per hexamer contact DNA at a time. Coordinated motions by a converter formed by DNA-disengaged RuvB subunits stimulates ATP hydrolysis and nucleotide exchange. Immobilization of the converter enables RuvB to convert the ATP-contained energy into a lever motion, pulling 2 nucleotides of DNA out of the RuvA tetramer per ATP hydrolyzed, thus driving DNA branch migration. The RuvB motors rotate together with the DNA substrate, which together with the progressing nucleotide cycle form the mechanistic basis for DNA recombination by continuous HJ branch migration. Branch migration allows RuvC to scan DNA until it finds its consensus sequence, where it cleaves and resolves cruciform DNA. The polypeptide is Holliday junction branch migration complex subunit RuvB (Pseudomonas savastanoi pv. phaseolicola (strain 1448A / Race 6) (Pseudomonas syringae pv. phaseolicola (strain 1448A / Race 6))).